The primary structure comprises 666 residues: Transketolase (666 aa).

His-26 contacts substrate. Thiamine diphosphate is bound by residues His-66 and 114–116 (GPL). Asp-155 contributes to the Mg(2+) binding site. Thiamine diphosphate contacts are provided by Gly-156 and Asn-185. Asn-185 and Ile-187 together coordinate Mg(2+). Residues His-261, Arg-358, and Ser-385 each contribute to the substrate site. His-261 contributes to the thiamine diphosphate binding site. The active-site Proton donor is Glu-411. Phe-437 provides a ligand contact to thiamine diphosphate. Substrate contacts are provided by His-461, Asp-469, and Arg-520.

Belongs to the transketolase family. As to quaternary structure, homodimer. It depends on Mg(2+) as a cofactor. Requires Ca(2+) as cofactor. The cofactor is Mn(2+). Co(2+) serves as cofactor. Thiamine diphosphate is required as a cofactor.

It carries out the reaction D-sedoheptulose 7-phosphate + D-glyceraldehyde 3-phosphate = aldehydo-D-ribose 5-phosphate + D-xylulose 5-phosphate. Functionally, catalyzes the transfer of a two-carbon ketol group from a ketose donor to an aldose acceptor, via a covalent intermediate with the cofactor thiamine pyrophosphate. The protein is Transketolase (tkt) of Buchnera aphidicola subsp. Baizongia pistaciae (strain Bp).